The chain runs to 157 residues: UPF0254 protein MTH_1148 (157 aa).

This sequence belongs to the UPF0254 family.

This chain is UPF0254 protein MTH_1148, found in Methanothermobacter thermautotrophicus (strain ATCC 29096 / DSM 1053 / JCM 10044 / NBRC 100330 / Delta H) (Methanobacterium thermoautotrophicum).